Consider the following 2542-residue polypeptide: Highly reducing polyketide synthase (2542 aa).

The region spanning 7–435 (PEPIAIVGMA…GANAHAILDA (429 aa)) is the Ketosynthase family 3 (KS3) domain. Catalysis depends on for beta-ketoacyl synthase activity residues Cys182, His317, and His357. A Malonyl-CoA:ACP transacylase (MAT) domain is found at 545–872 (FVFTGQGAQW…NLVGSLFLSG (328 aa)). Residues 927-1062 (HDLLGSRIPG…TTNETLRINS (136 aa)) form an N-terminal hotdog fold region. One can recognise a PKS/mFAS DH domain in the interval 927–1224 (HDLLGSRIPG…FLSLETATKE (298 aa)). The Proton acceptor; for dehydratase activity role is filled by His959. A C-terminal hotdog fold region spans residues 1072–1224 (NKDSYVRRWY…FLSLETATKE (153 aa)). Asp1137 (proton donor; for dehydratase activity) is an active-site residue. The tract at residues 1275–1574 (LTQLAIRSVV…AGADIMLDDY (300 aa)) is methyltransferase (CMet) domain. The segment at 1606-1634 (VNGTNGINSTNSVNVTNDTSGINDTNRMN) is disordered. Positions 1866–2186 (GKANSFYFES…QGDSVGSVVL (321 aa)) constitute an Enoyl reductase (ER) domain. A Ketoreductase (KR) domain is found at 2209-2389 (ASYLLVGCLG…QAMSMALGMI (181 aa)).

It depends on pantetheine 4'-phosphate as a cofactor.

It participates in antifungal biosynthesis. Highly reducing polyketide synthase; part of the gene cluster that mediates the biosynthesis of the tetrahydropyranyl antifungal agent lanomycin that acts as an inhibitor of CYP51 and blocks the ergosterol biosynthesis. The biosynthesis probably begins with the formation of an hexaketide, followed by methionine mediated alkylation of C-2 and C-6, and methylation of the reduced C-3 oxygen, pyran forming reductive ring closure, oxygenation of C-4, beta-keto reduction, enoyl reduction and dehydration of the remaining oxygens, and finally, acylation with glycine to complete the biosynthesis. This chain is Highly reducing polyketide synthase, found in Pyrenophora dematioidea (Helminthosporium dematioideum).